The chain runs to 320 residues: MNDMGEVQREKVAVIIGPTAVGKTKLSIDLAKALNGEIISGDSMQIYRTMDIGTAKVTKEEMDGIPHYMVDIKNPEESFSVAEFQERVRKHIREITERGKLPIIVGGTGLYIQSVLFDYQFTDDAGDAIYREQMEKLALERGVEYVHKKLQEVDPESAERIHANNVRRVIRALEIFHTSGEKMSDQLEKQENELLYDVSLIGLTMDREMLYDRINLRVDIMMDQGLLEEVEGLYNRGIRDCQSIQAIGYKEIYDYFEDRVSLEEAVSQLKTNSRRYAKRQLTWFRNKMDVTWFDVTDGEKTSEILRYIEGKLQLKSNNSK.

Position 17–24 (17–24 (GPTAVGKT)) interacts with ATP. Substrate is bound at residue 19-24 (TAVGKT). The interval 42–45 (DSMQ) is interaction with substrate tRNA.

The protein belongs to the IPP transferase family. Monomer. Requires Mg(2+) as cofactor.

The catalysed reaction is adenosine(37) in tRNA + dimethylallyl diphosphate = N(6)-dimethylallyladenosine(37) in tRNA + diphosphate. In terms of biological role, catalyzes the transfer of a dimethylallyl group onto the adenine at position 37 in tRNAs that read codons beginning with uridine, leading to the formation of N6-(dimethylallyl)adenosine (i(6)A). In Bacillus thuringiensis (strain Al Hakam), this protein is tRNA dimethylallyltransferase.